A 209-amino-acid polypeptide reads, in one-letter code: Uracil phosphoribosyltransferase (209 aa).

5-phospho-alpha-D-ribose 1-diphosphate-binding positions include Arg79, Arg104, and 131 to 139 (DPMLATGVS). Residues Ile194 and 199–201 (GDA) each bind uracil. Position 200 (Asp200) interacts with 5-phospho-alpha-D-ribose 1-diphosphate.

This sequence belongs to the UPRTase family. It depends on Mg(2+) as a cofactor.

The catalysed reaction is UMP + diphosphate = 5-phospho-alpha-D-ribose 1-diphosphate + uracil. It functions in the pathway pyrimidine metabolism; UMP biosynthesis via salvage pathway; UMP from uracil: step 1/1. Allosterically activated by GTP. Catalyzes the conversion of uracil and 5-phospho-alpha-D-ribose 1-diphosphate (PRPP) to UMP and diphosphate. The polypeptide is Uracil phosphoribosyltransferase (Thermotoga maritima (strain ATCC 43589 / DSM 3109 / JCM 10099 / NBRC 100826 / MSB8)).